The following is a 419-amino-acid chain: UDP-N-acetylglucosamine 1-carboxyvinyltransferase (419 aa).

22-23 (KN) is a binding site for phosphoenolpyruvate. UDP-N-acetyl-alpha-D-glucosamine is bound at residue R91. The active-site Proton donor is C115. C115 is subject to 2-(S-cysteinyl)pyruvic acid O-phosphothioketal. Residues 120–124 (RPVDL), 160–163 (KVSV), D305, and V327 contribute to the UDP-N-acetyl-alpha-D-glucosamine site.

This sequence belongs to the EPSP synthase family. MurA subfamily.

It is found in the cytoplasm. It carries out the reaction phosphoenolpyruvate + UDP-N-acetyl-alpha-D-glucosamine = UDP-N-acetyl-3-O-(1-carboxyvinyl)-alpha-D-glucosamine + phosphate. It functions in the pathway cell wall biogenesis; peptidoglycan biosynthesis. Functionally, cell wall formation. Adds enolpyruvyl to UDP-N-acetylglucosamine. The protein is UDP-N-acetylglucosamine 1-carboxyvinyltransferase of Salmonella schwarzengrund (strain CVM19633).